Consider the following 250-residue polypeptide: MECDKVGDLLLTSTYAIAFTGAGISTASGIPDFRGPNGLWKKYSPELATIEYFKKDPKGFWEFYRLRMRGLFTALPNRAHYALAELEKMGLIRAIITQNIDGLHQLAGSRNVIELHGNMRKCYCVNCLKTYDSDTVLDKIDKEGLPPKCECGGVIRPDVVLFGEPVYNISSALEIAREADLVLAIGSSLTVYPANMIPLTVKEMGGKLIILNAEETPLDNIADIVVRERVEEFLPCVVDYIKSQTLHRSS.

Positions 1–244 (MECDKVGDLL…PCVVDYIKSQ (244 aa)) constitute a Deacetylase sirtuin-type domain. Residues Ala-22, Thr-26, Phe-33, Arg-34, Gln-98, Ile-100, Asp-101, and His-116 each contribute to the NAD(+) site. Residue Phe-33 participates in nicotinamide binding. 2 residues coordinate nicotinamide: Ile-100 and Asp-101. The active-site Proton acceptor is the His-116. Zn(2+) contacts are provided by Cys-124, Cys-127, Cys-149, and Cys-151. NAD(+) is bound by residues Ser-187, Ser-188, Asn-212, and Val-230.

The protein belongs to the sirtuin family. Class U subfamily. It depends on Zn(2+) as a cofactor.

The protein resides in the cytoplasm. It catalyses the reaction N(6)-acetyl-L-lysyl-[protein] + NAD(+) + H2O = 2''-O-acetyl-ADP-D-ribose + nicotinamide + L-lysyl-[protein]. NAD-dependent protein deacetylase which modulates the activities of several enzymes which are inactive in their acetylated form. Deacetylates the N-terminal lysine residue of Alba, the major archaeal chromatin protein and that, in turn, increases Alba's DNA binding affinity, thereby repressing transcription. The sequence is that of NAD-dependent protein deacetylase from Sulfurisphaera tokodaii (strain DSM 16993 / JCM 10545 / NBRC 100140 / 7) (Sulfolobus tokodaii).